We begin with the raw amino-acid sequence, 702 residues long: MA3 DOMAIN-CONTAINING TRANSLATION REGULATORY FACTOR 3 (702 aa).

The disordered stretch occupies residues 1-100 (MEGFLTDQQR…PNDPNYDSGE (100 aa)). Basic residues predominate over residues 53-65 (VKHRRSHAGRSIR). Residues 81–91 (IDTDGDYHIDP) show a composition bias toward basic and acidic residues. An MI 1 domain is found at 116–237 (DYKKAAASII…PPAFLPRAAK (122 aa)). A Nuclear localization signal 1 motif is present at residues 267–274 (ERRWGGQT). 3 MI domains span residues 280–401 (EVKK…PSGE), 414–535 (RFKE…EISS), and 577–697 (DAKD…SLTE). Positions 615 to 622 (VKKALVMG) match the Nuclear localization signal 2 motif.

The protein belongs to the PDCD4 family. Interacts with EIN2, ETR2 and EIN4. Binds to EIF4A1. The association with ribosomes is modulated by cellular energy status and TOR activity. In terms of tissue distribution, mostly expressed in vegetative tissues, such as leaves and stems, and, to a lower extent, in roots and reproductive tissues, such as flower buds and flowers. Expressed in seedlings, roots, cauline leaf tips and flowers.

The protein localises to the nucleus. The protein resides in the cytoplasm. It localises to the cytosol. Involved in target of rapamycin (TOR)-regulated translation control, especially under energy-deficient conditions. Involved in the regulation of the ethylene-mediated signaling pathway. Involved in salt stress responses. Reduced cotyledons size and early flowering. This is MA3 DOMAIN-CONTAINING TRANSLATION REGULATORY FACTOR 3 from Arabidopsis thaliana (Mouse-ear cress).